A 271-amino-acid polypeptide reads, in one-letter code: Neurexophilin-1 (271 aa).

A signal peptide spans 1 to 21 (MQAACWYVLLLLQPTVYLVTC). Residues 22–97 (ANLTNGGKSE…WDWLRNSTDL (76 aa)) are II. Asn-23, Asn-68, Asn-93, Asn-146, Asn-156, and Asn-162 each carry an N-linked (GlcNAc...) asparagine glycan. The segment at 98–176 (QEPRPRAKRR…LVPPTKIVEF (79 aa)) is III. Positions 177-185 (DLAQQTVID) are IV (linker domain). The interval 186-271 (AKDSKSFNCR…HSDTPYFPSG (86 aa)) is v (Cys-rich).

Belongs to the neurexophilin family. Post-translationally, may be proteolytically processed at the boundary between the N-terminal non-conserved and the central conserved domain in neuron-like cells. As to expression, highest level in brain.

It localises to the secreted. May be signaling molecules that resemble neuropeptides. Ligand for alpha-neurexins. The protein is Neurexophilin-1 (Nxph1) of Rattus norvegicus (Rat).